The chain runs to 468 residues: Tapasin-related protein (468 aa).

The signal sequence occupies residues 1 to 18; it reads MGTQEGWCLLLCLALSGA. At 19-405 the chain is on the lumenal side; sequence AETKPHPAEG…STQVVPPERR (387 aa). The Ig-like V-type domain occupies 181–297; that stretch reads PQGTVRTAVE…SLYRAQQIIQ (117 aa). Intrachain disulfides connect Cys212–Cys283 and Cys321–Cys382. Positions 304–394 constitute an Ig-like C1-type domain; sequence PKVRLSLANE…THISLEEPLG (91 aa). A helical transmembrane segment spans residues 406–426; that stretch reads TALGVIFASSLFLLALMFLGL. Over 427-468 the chain is Cytoplasmic; sequence QRRQAPTGLGLLQAERWETTSCADTQSSHLHEDRTARVSQPS. Residues 449–468 are disordered; that stretch reads ADTQSSHLHEDRTARVSQPS.

In terms of assembly, interacts with peptide-free HLA-A*02-B2M complexes or those loaded with low affinity peptides, likely facilitating peptide exchange onto higher affinity peptides. Interacts with MR1 in a ligand-independent way; this interaction may stabilize MR1 pool and facilitate ligand loading and dissociation.

It is found in the cell membrane. The protein localises to the endoplasmic reticulum membrane. It localises to the microsome membrane. The protein resides in the golgi apparatus membrane. Component of the antigen processing and presentation pathway, which binds to MHC class I coupled with beta2-microglobulin/B2M. Association between TAPBPR and MHC class I occurs in the absence of a functional peptide-loading complex (PLC). In Homo sapiens (Human), this protein is Tapasin-related protein (TAPBPL).